A 405-amino-acid chain; its full sequence is Imidazolonepropionase (405 aa).

Fe(3+) is bound by residues His-72 and His-74. Residues His-72 and His-74 each contribute to the Zn(2+) site. Positions 81, 144, and 177 each coordinate 4-imidazolone-5-propanoate. Position 144 (Tyr-144) interacts with N-formimidoyl-L-glutamate. Fe(3+) is bound at residue His-242. His-242 contacts Zn(2+). A 4-imidazolone-5-propanoate-binding site is contributed by Gln-245. Fe(3+) is bound at residue Asp-317. Asp-317 is a Zn(2+) binding site. N-formimidoyl-L-glutamate contacts are provided by Asn-319 and Gly-321. Residue Thr-322 participates in 4-imidazolone-5-propanoate binding.

It belongs to the metallo-dependent hydrolases superfamily. HutI family. Zn(2+) is required as a cofactor. The cofactor is Fe(3+).

It is found in the cytoplasm. It catalyses the reaction 4-imidazolone-5-propanoate + H2O = N-formimidoyl-L-glutamate. The protein operates within amino-acid degradation; L-histidine degradation into L-glutamate; N-formimidoyl-L-glutamate from L-histidine: step 3/3. Its function is as follows. Catalyzes the hydrolytic cleavage of the carbon-nitrogen bond in imidazolone-5-propanoate to yield N-formimidoyl-L-glutamate. It is the third step in the universal histidine degradation pathway. This Erwinia tasmaniensis (strain DSM 17950 / CFBP 7177 / CIP 109463 / NCPPB 4357 / Et1/99) protein is Imidazolonepropionase.